The sequence spans 347 residues: N-acetyl-gamma-glutamyl-phosphate reductase (347 aa).

Residue Cys-152 is part of the active site.

It belongs to the NAGSA dehydrogenase family. Type 1 subfamily.

The protein localises to the cytoplasm. It carries out the reaction N-acetyl-L-glutamate 5-semialdehyde + phosphate + NADP(+) = N-acetyl-L-glutamyl 5-phosphate + NADPH + H(+). It participates in amino-acid biosynthesis; L-arginine biosynthesis; N(2)-acetyl-L-ornithine from L-glutamate: step 3/4. Catalyzes the NADPH-dependent reduction of N-acetyl-5-glutamyl phosphate to yield N-acetyl-L-glutamate 5-semialdehyde. The sequence is that of N-acetyl-gamma-glutamyl-phosphate reductase from Neisseria meningitidis serogroup C / serotype 2a (strain ATCC 700532 / DSM 15464 / FAM18).